We begin with the raw amino-acid sequence, 502 residues long: Sulfate adenylyltransferase (502 aa).

Positions 1-167 (MPSPHGGVLQ…LEAIQLPVHY (167 aa)) are N-terminal. The catalytic stretch occupies residues 168–393 (DYPGWRKTPA…LRESNPSRPK (226 aa)). Gln-195 lines the sulfate pocket. ATP-binding positions include 195-198 (QTRN) and 289-292 (GRDH). Active-site residues include Thr-196, Arg-197, and Asn-198. Sulfate is bound at residue Arg-197. Residue Ala-293 participates in sulfate binding. Val-331 serves as a coordination point for ATP. The interval 394-502 (QGFALVLSET…FLEDQGFFQF (109 aa)) is required for oligomerization; adenylyl-sulfate kinase-like.

It belongs to the sulfate adenylyltransferase family. As to quaternary structure, homohexamer. Dimer of trimers.

It localises to the cytoplasm. The enzyme catalyses sulfate + ATP + H(+) = adenosine 5'-phosphosulfate + diphosphate. It participates in sulfur metabolism; hydrogen sulfide biosynthesis; sulfite from sulfate: step 1/3. Its function is as follows. Catalyzes the first intracellular reaction of sulfate assimilation, forming adenosine-5'-phosphosulfate (APS) from inorganic sulfate and ATP. Plays an important role in sulfate activation as a component of the biosynthesis pathway of sulfur-containing amino acids. The sequence is that of Sulfate adenylyltransferase from Kluyveromyces lactis (strain ATCC 8585 / CBS 2359 / DSM 70799 / NBRC 1267 / NRRL Y-1140 / WM37) (Yeast).